The chain runs to 86 residues: Large ribosomal subunit protein bL31B (86 aa).

The protein belongs to the bacterial ribosomal protein bL31 family. Type B subfamily. As to quaternary structure, part of the 50S ribosomal subunit.

The protein is Large ribosomal subunit protein bL31B of Streptococcus pyogenes serotype M1.